A 94-amino-acid polypeptide reads, in one-letter code: Large ribosomal subunit protein bL27 (94 aa).

A propeptide spanning residues 1–9 (MLKLNLQFF) is cleaved from the precursor. Residues 13–32 (KGLGSTKNGRDSESKRLGAK) form a disordered region. Residues 20 to 32 (NGRDSESKRLGAK) are compositionally biased toward basic and acidic residues.

It belongs to the bacterial ribosomal protein bL27 family. The N-terminus is cleaved by ribosomal processing cysteine protease Prp.

The polypeptide is Large ribosomal subunit protein bL27 (Staphylococcus saprophyticus subsp. saprophyticus (strain ATCC 15305 / DSM 20229 / NCIMB 8711 / NCTC 7292 / S-41)).